Here is a 166-residue protein sequence, read N- to C-terminus: UPF0260 protein GbCGDNIH1_2046 (166 aa).

Residues 147-166 are disordered; that stretch reads RFPRPRRPRQEPAGKTADES. Residues 154–166 are compositionally biased toward basic and acidic residues; sequence PRQEPAGKTADES.

Belongs to the UPF0260 family.

The protein is UPF0260 protein GbCGDNIH1_2046 of Granulibacter bethesdensis (strain ATCC BAA-1260 / CGDNIH1).